A 704-amino-acid chain; its full sequence is Polyribonucleotide nucleotidyltransferase (704 aa).

Residues D488 and D494 each contribute to the Mg(2+) site. The KH domain occupies 555–614 (PRITTIKINPEKIRDVIGKGGATIRALTEETGTTIELDDDGTVKIASSNGEATKEAIRRI). Residues 624 to 692 (GTVYNGKVVR…RQGRVRLSMK (69 aa)) enclose the S1 motif domain.

The protein belongs to the polyribonucleotide nucleotidyltransferase family. As to quaternary structure, component of the RNA degradosome, which is a multiprotein complex involved in RNA processing and mRNA degradation. The cofactor is Mg(2+).

It is found in the cytoplasm. It carries out the reaction RNA(n+1) + phosphate = RNA(n) + a ribonucleoside 5'-diphosphate. Its function is as follows. Involved in mRNA degradation. Catalyzes the phosphorolysis of single-stranded polyribonucleotides processively in the 3'- to 5'-direction. The polypeptide is Polyribonucleotide nucleotidyltransferase (Shewanella pealeana (strain ATCC 700345 / ANG-SQ1)).